Consider the following 235-residue polypeptide: Proteasome subunit alpha type-2 (235 aa).

The protein belongs to the peptidase T1A family. The 26S proteasome consists of a 20S proteasome core and two 19S regulatory subunits. The 20S proteasome core is composed of 28 subunits that are arranged in four stacked rings, resulting in a barrel-shaped structure. The two end rings are each formed by seven alpha subunits, and the two central rings are each formed by seven beta subunits. The catalytic chamber with the active sites is on the inside of the barrel.

It localises to the cytoplasm. The protein localises to the nucleus. In terms of biological role, the proteasome is a multicatalytic proteinase complex which is characterized by its ability to cleave peptides with Arg, Phe, Tyr, Leu, and Glu adjacent to the leaving group at neutral or slightly basic pH. The proteasome has an ATP-dependent proteolytic activity. The sequence is that of Proteasome subunit alpha type-2 (PAB1) from Oryza sativa subsp. indica (Rice).